The chain runs to 398 residues: Probable aminomethyltransferase (398 aa).

Belongs to the GcvT family. The glycine cleavage system is composed of four proteins: P, T, L and H.

It catalyses the reaction N(6)-[(R)-S(8)-aminomethyldihydrolipoyl]-L-lysyl-[protein] + (6S)-5,6,7,8-tetrahydrofolate = N(6)-[(R)-dihydrolipoyl]-L-lysyl-[protein] + (6R)-5,10-methylene-5,6,7,8-tetrahydrofolate + NH4(+). In terms of biological role, the glycine cleavage system catalyzes the degradation of glycine. In Pyrococcus furiosus (strain ATCC 43587 / DSM 3638 / JCM 8422 / Vc1), this protein is Probable aminomethyltransferase.